The following is a 191-amino-acid chain: Insulin-like peptide INSL6 (191 aa).

The N-terminal stretch at 1 to 22 (MKQLCCSCLLWLGLLLTPFSRE) is a signal peptide. 3 disulfides stabilise this stretch: cysteine 33–cysteine 172, cysteine 45–cysteine 185, and cysteine 171–cysteine 176. The propeptide at 53-161 (FEMEEQSPMT…RSLFWGNHSQ (109 aa)) is connecting peptide.

This sequence belongs to the insulin family.

It localises to the secreted. May have a role in sperm development and fertilization. The chain is Insulin-like peptide INSL6 (Insl6) from Mus musculus (Mouse).